The sequence spans 64 residues: Large ribosomal subunit protein bL35 (64 aa).

It belongs to the bacterial ribosomal protein bL35 family.

In Vibrio atlanticus (strain LGP32) (Vibrio splendidus (strain Mel32)), this protein is Large ribosomal subunit protein bL35.